Consider the following 638-residue polypeptide: ATP-dependent zinc metalloprotease FtsH (638 aa).

The Cytoplasmic segment spans residues 1–4 (MNNQ). A helical membrane pass occupies residues 5–25 (GKNIIVWAVIFVFVILLFNVF). Residues 26-103 (QSDGLLSSKN…VVPPETRMNT (78 aa)) are Periplasmic-facing. The helical transmembrane segment at 104 to 124 (FLSFLISWFPMLLLIGVWVFF) threads the bilayer. Residues 125–638 (MRQMHGGGKA…PIKAKKEDKS (514 aa)) are Cytoplasmic-facing. 195 to 202 (GPPGTGKT) contacts ATP. A Zn(2+)-binding site is contributed by His417. Glu418 is an active-site residue. His421 and Asp495 together coordinate Zn(2+). The disordered stretch occupies residues 523-544 (SASEDMYTNRNSSSDRSESTSE).

In the central section; belongs to the AAA ATPase family. It in the C-terminal section; belongs to the peptidase M41 family. Homohexamer. Requires Zn(2+) as cofactor.

The protein localises to the cell inner membrane. Acts as a processive, ATP-dependent zinc metallopeptidase for both cytoplasmic and membrane proteins. Plays a role in the quality control of integral membrane proteins. This Rickettsia bellii (strain RML369-C) protein is ATP-dependent zinc metalloprotease FtsH.